We begin with the raw amino-acid sequence, 248 residues long: 3-oxoacyl-[acyl-carrier-protein] reductase FabG (248 aa).

Residues G14 to R17, T39, N65 to L66, and N92 each bind NADP(+). S144 provides a ligand contact to substrate. Residue Y157 is the Proton acceptor of the active site. NADP(+) contacts are provided by residues Y157–K161 and I190.

The protein belongs to the short-chain dehydrogenases/reductases (SDR) family. As to quaternary structure, homotetramer.

The enzyme catalyses a (3R)-hydroxyacyl-[ACP] + NADP(+) = a 3-oxoacyl-[ACP] + NADPH + H(+). It participates in lipid metabolism; fatty acid biosynthesis. In terms of biological role, catalyzes the NADPH-dependent reduction of beta-ketoacyl-ACP substrates to beta-hydroxyacyl-ACP products, the first reductive step in the elongation cycle of fatty acid biosynthesis. The chain is 3-oxoacyl-[acyl-carrier-protein] reductase FabG (fabG) from Aquifex aeolicus (strain VF5).